The sequence spans 611 residues: tRNA uridine 5-carboxymethylaminomethyl modification enzyme MnmG (611 aa).

Residue 14–19 participates in FAD binding; the sequence is GAGHAG. 274–288 is a binding site for NAD(+); sequence GPRYCPSIEDKIVKF.

It belongs to the MnmG family. Homodimer. Heterotetramer of two MnmE and two MnmG subunits. FAD serves as cofactor.

It localises to the cytoplasm. In terms of biological role, NAD-binding protein involved in the addition of a carboxymethylaminomethyl (cmnm) group at the wobble position (U34) of certain tRNAs, forming tRNA-cmnm(5)s(2)U34. This Chlamydia abortus (strain DSM 27085 / S26/3) (Chlamydophila abortus) protein is tRNA uridine 5-carboxymethylaminomethyl modification enzyme MnmG.